Reading from the N-terminus, the 245-residue chain is Ribonuclease 3 (245 aa).

One can recognise an RNase III domain in the interval 24 to 146; sequence YTVFSQKLGY…IIGAIYLESG (123 aa). Glutamate 59 provides a ligand contact to Mg(2+). Residue aspartate 63 is part of the active site. Mg(2+)-binding residues include asparagine 132 and glutamate 135. The active site involves glutamate 135. Residues 173–243 enclose the DRBM domain; it reads DPKTLLQEYL…ARRAYKLAVV (71 aa).

The protein belongs to the ribonuclease III family. In terms of assembly, homodimer. Mg(2+) serves as cofactor.

The protein localises to the cytoplasm. The catalysed reaction is Endonucleolytic cleavage to 5'-phosphomonoester.. In terms of biological role, digests double-stranded RNA. Involved in the processing of primary rRNA transcript to yield the immediate precursors to the large and small rRNAs (23S and 16S). Processes some mRNAs, and tRNAs when they are encoded in the rRNA operon. Processes pre-crRNA and tracrRNA of type II CRISPR loci if present in the organism. The sequence is that of Ribonuclease 3 from Nitrosomonas eutropha (strain DSM 101675 / C91 / Nm57).